The primary structure comprises 248 residues: ATP synthase subunit a (248 aa).

7 helical membrane-spanning segments follow: residues 29–49 (AMLT…CLFS), 85–105 (VFPF…QGLV), 115–135 (LIQT…IVLA), 143–163 (LFLP…IEIV), 176–196 (LFAN…VAWA), 201–221 (GGLL…LFGL), and 227–247 (LIQA…AIVL).

It belongs to the ATPase A chain family. F-type ATPases have 2 components, CF(1) - the catalytic core - and CF(0) - the membrane proton channel. CF(1) has five subunits: alpha(3), beta(3), gamma(1), delta(1), epsilon(1). CF(0) has three main subunits: a, b and c.

The protein resides in the mitochondrion inner membrane. Functionally, mitochondrial membrane ATP synthase (F(1)F(0) ATP synthase or Complex V) produces ATP from ADP in the presence of a proton gradient across the membrane which is generated by electron transport complexes of the respiratory chain. F-type ATPases consist of two structural domains, F(1) - containing the extramembraneous catalytic core and F(0) - containing the membrane proton channel, linked together by a central stalk and a peripheral stalk. During catalysis, ATP synthesis in the catalytic domain of F(1) is coupled via a rotary mechanism of the central stalk subunits to proton translocation. Key component of the proton channel; it may play a direct role in the translocation of protons across the membrane. The protein is ATP synthase subunit a (ATP6) of Pylaiella littoralis (Seaweed).